Here is a 228-residue protein sequence, read N- to C-terminus: L-ribulose-5-phosphate 4-epimerase UlaF (228 aa).

Substrate-binding positions include 26–27 (GN), 43–44 (SG), and 72–73 (SS). Residues Asp74, His93, and His95 each contribute to the Zn(2+) site. The active-site Proton donor/acceptor is the Asp118. Residue His167 coordinates Zn(2+). Tyr225 (proton donor/acceptor) is an active-site residue.

The protein belongs to the aldolase class II family. AraD/FucA subfamily. Zn(2+) serves as cofactor.

It carries out the reaction L-ribulose 5-phosphate = D-xylulose 5-phosphate. Its pathway is cofactor degradation; L-ascorbate degradation; D-xylulose 5-phosphate from L-ascorbate: step 4/4. In terms of biological role, catalyzes the isomerization of L-ribulose 5-phosphate to D-xylulose 5-phosphate. Is involved in the anaerobic L-ascorbate utilization. This Escherichia fergusonii (strain ATCC 35469 / DSM 13698 / CCUG 18766 / IAM 14443 / JCM 21226 / LMG 7866 / NBRC 102419 / NCTC 12128 / CDC 0568-73) protein is L-ribulose-5-phosphate 4-epimerase UlaF.